The sequence spans 459 residues: ERBB receptor feedback inhibitor 1 (459 aa).

S2 carries the post-translational modification N-acetylserine. Phosphothreonine is present on residues T126 and T130. The disordered stretch occupies residues 227–352 (QNRVVPDPNP…VMPPTQSFAP (126 aa)). Phosphoserine occurs at positions 250 and 271. Positions 264–273 (SSCTHRASPS) are enriched in polar residues. Pro residues predominate over residues 282–291 (PPRVPIPPRP). S300 is modified (phosphoserine). The span at 310 to 323 (DEDRPPKVPPREPL) shows a compositional bias: basic and acidic residues. A compositionally biased stretch (polar residues) spans 324-335 (SRSNSRTPSPKS). The tract at residues 332–361 (SPKSLPSYLNGVMPPTQSFAPDPKYVSSKA) is interaction with EGFR and ERBB2 and regulation of EGFR activation. S458 bears the Phosphoserine mark.

It belongs to the MIG6 family. In terms of assembly, interacts with EGFR and ERBB2.

The protein resides in the cytoplasm. Its subcellular location is the cell membrane. It localises to the nucleus. Its function is as follows. Negative regulator of EGFR signaling in skin morphogenesis. Acts as a negative regulator for several EGFR family members, including ERBB2, ERBB3 and ERBB4. Inhibits EGFR catalytic activity by interfering with its dimerization. Inhibits autophosphorylation of EGFR, ERBB2 and ERBB4. Important for normal keratinocyte proliferation and differentiation. Plays a role in modulating the response to steroid hormones in the uterus. Required for normal response to progesterone in the uterus and for fertility. Mediates epithelial estrogen responses in the uterus by regulating ESR1 levels and activation. Important for regulation of endometrium cell proliferation. Important for normal prenatal and perinatal lung development. This is ERBB receptor feedback inhibitor 1 (Errfi1) from Rattus norvegicus (Rat).